Reading from the N-terminus, the 474-residue chain is Synaptotagmin-17 (474 aa).

The segment at 54–112 is disordered; sequence PAQTPPWLVSNRSEDKEGDSDNTTSEPPATPQDTSPDRRRSSSDTSRSTYSLTRRISSL. Residues 96–112 are compositionally biased toward low complexity; it reads SDTSRSTYSLTRRISSL. 2 consecutive C2 domains span residues 184–310 and 321–455; these read QLGM…HWWK and ELGE…EQWH.

Belongs to the synaptotagmin family.

The protein localises to the membrane. Functionally, may play a role in dendrite formation by melanocytes. The sequence is that of Synaptotagmin-17 (syt17) from Xenopus tropicalis (Western clawed frog).